The primary structure comprises 333 residues: Phosphate acyltransferase (333 aa).

It belongs to the PlsX family. As to quaternary structure, homodimer. Probably interacts with PlsY.

It localises to the cytoplasm. It catalyses the reaction a fatty acyl-[ACP] + phosphate = an acyl phosphate + holo-[ACP]. Its pathway is lipid metabolism; phospholipid metabolism. In terms of biological role, catalyzes the reversible formation of acyl-phosphate (acyl-PO(4)) from acyl-[acyl-carrier-protein] (acyl-ACP). This enzyme utilizes acyl-ACP as fatty acyl donor, but not acyl-CoA. The sequence is that of Phosphate acyltransferase from Ligilactobacillus salivarius (strain UCC118) (Lactobacillus salivarius).